The following is a 714-amino-acid chain: Protein spire homolog 2 (714 aa).

The KIND domain maps to 22-203 (LSLEEVLKAY…RALFVETLEL (182 aa)). The segment at 136-162 (DSEDSGCGAADEGYGGPEEEEEAEGVP) is disordered. 3 WH2 domains span residues 248–262 (QLMR…LKKV), 278–296 (PFEM…LRKV), and 342–359 (LHEK…LRPV). 4 positions are modified to phosphoserine: serine 371, serine 440, serine 442, and serine 476. Positions 453 to 516 (VASGLQSATH…SSGDRPEASM (64 aa)) are disordered. Residues 486-496 (DQGTCPASVSD) show a composition bias toward polar residues. Positions 534–554 (LALTVEEVMDVRRVLVKAEME) are spir-box.

It belongs to the spire family.

It localises to the cytoplasm. The protein resides in the cytoskeleton. Its subcellular location is the cytosol. The protein localises to the cell membrane. It is found in the cytoplasmic vesicle membrane. Its function is as follows. Acts as an actin nucleation factor, remains associated with the slow-growing pointed end of the new filament. Involved in intracellular vesicle transport along actin fibers, providing a novel link between actin cytoskeleton dynamics and intracellular transport. Required for asymmetric spindle positioning and asymmetric cell division during meiosis. Required for normal formation of the cleavage furrow and for polar body extrusion during female germ cell meiosis. Also acts in the nucleus: together with SPIRE1 and SPIRE2, promotes assembly of nuclear actin filaments in response to DNA damage in order to facilitate movement of chromatin and repair factors after DNA damage. This Homo sapiens (Human) protein is Protein spire homolog 2 (SPIRE2).